Here is a 213-residue protein sequence, read N- to C-terminus: uncharacterized protein (213 aa).

A signal peptide spans 1–21 (MKKILFLTVICFCLSSIKAYA).

This is an uncharacterized protein from Rickettsia prowazekii (strain Madrid E).